The sequence spans 729 residues: Sodium-dependent neutral amino acid transporter B(0)AT2 (729 aa).

The Cytoplasmic portion of the chain corresponds to 1–69 (MPKNSKVVKR…ERPAWNSKLQ (69 aa)). Residues Ser25 and Ser55 each carry the phosphoserine modification. Residues 42–61 (DVQEEKDTDAEDGSEADDER) are disordered. Acidic residues predominate over residues 43–59 (VQEEKDTDAEDGSEADD). 3 consecutive transmembrane segments (helical) span residues 70–90 (YILA…FPYL), 98–117 (AYLL…LFFL), and 142–162 (GIGF…NVII). Over 163 to 225 (GWTLFYFSQS…SSISDSGGLN (63 aa)) the chain is Extracellular. Asn187 is a glycosylation site (N-linked (GlcNAc...) asparagine). 2 helical membrane-spanning segments follow: residues 226–244 (WKMT…LAMI) and 253–270 (IMYF…CFLI). A glycan (N-linked (GlcNAc...) asparagine) is linked at Asn276. 2 consecutive transmembrane segments (helical) span residues 306–323 (VFFA…FSSY) and 335–356 (VLVS…FAVL). Over 357 to 452 (GFKANIVNEK…FIAFTEAMTH (96 aa)) the chain is Extracellular. Residues Asn383 and Asn394 are each glycosylated (N-linked (GlcNAc...) asparagine). The next 5 membrane-spanning stretches (helical) occupy residues 453–472 (FPAS…NLGL), 496–514 (ILTV…IFVQ), 530–550 (TLPL…VYGI), 571–592 (YMWK…IVNM), and 620–642 (VVCF…IRRC). Topologically, residues 643–729 (NLIDDSSGNL…DMPDMPESDL (87 aa)) are cytoplasmic. A phosphoserine mark is found at Ser687, Ser699, and Ser701.

It belongs to the sodium:neurotransmitter symporter (SNF) (TC 2.A.22) family. SLC6A15 subfamily. Significant expressed in brain, lung and kidney. In brain, mainly expressed int the cortex, the cerebellum and the brain stem.

The protein resides in the membrane. The catalysed reaction is L-pipecolate(in) + Na(+)(in) = L-pipecolate(out) + Na(+)(out). The enzyme catalyses L-leucine(in) + Na(+)(in) = L-leucine(out) + Na(+)(out). It catalyses the reaction L-isoleucine(in) + Na(+)(in) = L-isoleucine(out) + Na(+)(out). It carries out the reaction L-methionine(in) + Na(+)(in) = L-methionine(out) + Na(+)(out). The catalysed reaction is L-proline(in) + Na(+)(in) = L-proline(out) + Na(+)(out). The enzyme catalyses L-alanine(in) + Na(+)(in) = L-alanine(out) + Na(+)(out). It catalyses the reaction L-asparagine(in) + Na(+)(in) = L-asparagine(out) + Na(+)(out). It carries out the reaction L-valine(in) + Na(+)(in) = L-valine(out) + Na(+)(out). The catalysed reaction is L-cysteine(in) + Na(+)(in) = L-cysteine(out) + Na(+)(out). The enzyme catalyses L-glutamine(in) + Na(+)(in) = L-glutamine(out) + Na(+)(out). It catalyses the reaction L-serine(in) + Na(+)(in) = L-serine(out) + Na(+)(out). It carries out the reaction L-threonine(in) + Na(+)(in) = L-threonine(out) + Na(+)(out). The catalysed reaction is L-phenylalanine(in) + Na(+)(in) = L-phenylalanine(out) + Na(+)(out). In terms of biological role, functions as a sodium-dependent neutral amino acid transporter. Exhibits preference for methionine and for the branched-chain amino acids, particularly leucine, valine and isoleucine. Can also transport low-affinity substrates such as alanine, phenylalanine, glutamine and pipecolic acid. Mediates the saturable, pH-sensitive and electrogenic cotransport of proline and sodium ions with a stoichiometry of 1:1. May have a role as transporter for neurotransmitter precursors into neurons. In contrast to other members of the neurotransmitter transporter family, does not appear to be chloride-dependent. The sequence is that of Sodium-dependent neutral amino acid transporter B(0)AT2 (Slc6a15) from Mus musculus (Mouse).